Consider the following 345-residue polypeptide: uncharacterized protein (345 aa).

The region spanning 1–198 (MDVLSAVLLA…LSEGLLDHEE (198 aa)) is the CNNM transmembrane domain. A run of 2 helical transmembrane segments spans residues 3 to 23 (VLSA…FVGA) and 95 to 115 (VPPA…HVLL). 2 consecutive CBS domains span residues 217–280 (AVPL…PQTV) and 285–342 (VVRP…MRDG). Residues 312-332 (LALVTADNGSVVGMVALEDVV) form a helical membrane-spanning segment.

It belongs to the TerC family.

It localises to the cell membrane. This is an uncharacterized protein from Mycobacterium tuberculosis (strain CDC 1551 / Oshkosh).